The sequence spans 223 residues: Membrane protein (223 aa).

The Virion surface segment spans residues 1–18 (MAENCTLDSEQAVLLFKE). A helical membrane pass occupies residues 19-39 (YNLFITAFLLFLTILLQYGYA). Residues 40–49 (TRSRTIYILK) lie on the Intravirion side of the membrane. The helical transmembrane segment at 50 to 70 (MIVLWCFWPLNIAVGVISCIY) threads the bilayer. Topologically, residues 71-75 (PPNTG) are virion surface. A helical membrane pass occupies residues 76–96 (GLVAAIILTVFACLSFVGYWI). Over 97 to 223 (QSCRLFKRCR…VATGGSSLYT (127 aa)) the chain is Intravirion.

Belongs to the gammacoronaviruses M protein family. As to quaternary structure, homomultimer. Interacts with envelope E protein in the budding compartment of the host cell, which is located between endoplasmic reticulum and the Golgi complex. Forms a complex with HE and S proteins. Interacts with nucleocapsid N protein. This interaction probably participates in RNA packaging into the virus.

The protein localises to the virion membrane. It is found in the host Golgi apparatus membrane. Functionally, component of the viral envelope that plays a central role in virus morphogenesis and assembly via its interactions with other viral proteins. This Gallus gallus (Chicken) protein is Membrane protein.